Consider the following 92-residue polypeptide: Small ribosomal subunit protein uS19 (92 aa).

This sequence belongs to the universal ribosomal protein uS19 family.

Its function is as follows. Protein S19 forms a complex with S13 that binds strongly to the 16S ribosomal RNA. In Acidiphilium cryptum (strain JF-5), this protein is Small ribosomal subunit protein uS19.